Reading from the N-terminus, the 140-residue chain is uncharacterized protein (140 aa).

This is an uncharacterized protein from Archaeoglobus fulgidus (strain ATCC 49558 / DSM 4304 / JCM 9628 / NBRC 100126 / VC-16).